The following is an 82-amino-acid chain: MPKRTLQGVVVSDKQAKTVVVRVDRRFTHPIYKKTIRRSKNYHAHDENNEFKPGDMVWIEESKPISKLKRWTVVRGEQRKTA.

Belongs to the universal ribosomal protein uS17 family. As to quaternary structure, part of the 30S ribosomal subunit.

Functionally, one of the primary rRNA binding proteins, it binds specifically to the 5'-end of 16S ribosomal RNA. The chain is Small ribosomal subunit protein uS17 from Nitrobacter winogradskyi (strain ATCC 25391 / DSM 10237 / CIP 104748 / NCIMB 11846 / Nb-255).